The sequence spans 210 residues: Chorismate pyruvate-lyase (210 aa).

It belongs to the chorismate pyruvate-lyase type 2 family.

It catalyses the reaction chorismate = 4-hydroxybenzoate + pyruvate. Its function is as follows. Removes the pyruvyl group from chorismate to provide 4-hydroxybenzoate (4HB). Involved in the synthesis of glycosylated p-hydroxybenzoic acid methyl esters (p-HBADs) and phenolic glycolipids (PGL) that play important roles in the pathogenesis of mycobacterial infections. The polypeptide is Chorismate pyruvate-lyase (Mycobacterium leprae (strain TN)).